Here is a 144-residue protein sequence, read N- to C-terminus: Putative pre-16S rRNA nuclease (144 aa).

It belongs to the YqgF nuclease family.

The protein localises to the cytoplasm. Functionally, could be a nuclease involved in processing of the 5'-end of pre-16S rRNA. The polypeptide is Putative pre-16S rRNA nuclease (Mycoplasma mobile (strain ATCC 43663 / 163K / NCTC 11711) (Mesomycoplasma mobile)).